A 191-amino-acid polypeptide reads, in one-letter code: Clusterin (191 aa).

N-linked (GlcNAc...) asparagine glycans are attached at residues Asn-79, Asn-116, Asn-142, and Asn-162. Phosphoserine is present on Ser-184.

It belongs to the clusterin family. In terms of assembly, antiparallel disulfide-linked heterodimer of an alpha chain and a beta chain. Self-associates and forms higher oligomers. Interacts with a broad range of misfolded proteins, including APP, APOC2 and LYZ. Slightly acidic pH promotes interaction with misfolded proteins. Forms high-molecular weight oligomers upon interaction with misfolded proteins. Interacts with APOA1, LRP2, CLUAP1 and PON1. Interacts with the complement membrane attack complex. Interacts (via alpha chain) with XRCC6. Interacts with SYVN1, COMMD1, BTRC, CUL1 and with ubiquitin and SCF (SKP1-CUL1-F-box protein) E3 ubiquitin-protein ligase complexes. Interacts (via alpha chain) with BAX in stressed cells, where BAX undergoes a conformation change leading to association with the mitochondrial membrane. Does not interact with BAX in unstressed cells. Found in a complex with LTF, CLU, EPPIN and SEMG1. Interacts (immaturely glycosylated pre-secreted form) with HSPA5; this interaction promotes CLU stability and facilitates stress-induced CLU retrotranslocation from the secretory pathway to the mitochondria, thereby reducing stress-induced apoptosis by stabilizing mitochondrial membrane integrity. Interacts with BCL2L1; this interaction releases and activates BAX and promotes cell death. Interacts with TGFBR2 and ACVR1. Interacts (secreted form) with STMN3; this interaction may act as an important modulator during neuronal differentiation. Proteolytically cleaved on its way through the secretory system, probably within the Golgi lumen. Proteolytic cleavage is not necessary for its chaperone activity. All non-secreted forms are not proteolytically cleaved. Chaperone activity of uncleaved forms is dependent on a non-reducing environment. Post-translationally, polyubiquitinated, leading to proteasomal degradation. Under cellular stress, the intracellular level of cleaved form is reduced due to proteasomal degradation. In terms of processing, heavily N-glycosylated. About 30% of the protein mass is comprised of complex N-linked carbohydrate. Endoplasmic reticulum (ER) stress induces changes in glycosylation status and increases level of hypoglycosylated forms. Core carbohydrates are essential for chaperone activity. Non-secreted forms are hypoglycosylated or unglycosylated.

The protein localises to the secreted. Its subcellular location is the nucleus. The protein resides in the cytoplasm. It is found in the mitochondrion membrane. It localises to the cytosol. The protein localises to the microsome. Its subcellular location is the endoplasmic reticulum. The protein resides in the mitochondrion. It is found in the perinuclear region. It localises to the cytoplasmic vesicle. The protein localises to the secretory vesicle. Its subcellular location is the chromaffin granule. Functionally, functions as extracellular chaperone that prevents aggregation of non native proteins. Prevents stress-induced aggregation of blood plasma proteins. Inhibits formation of amyloid fibrils by APP, APOC2, B2M, CALCA, CSN3, SNCA and aggregation-prone LYZ variants (in vitro). Does not require ATP. Maintains partially unfolded proteins in a state appropriate for subsequent refolding by other chaperones, such as HSPA8/HSC70. Does not refold proteins by itself. Binding to cell surface receptors triggers internalization of the chaperone-client complex and subsequent lysosomal or proteasomal degradation. When secreted, protects cells against apoptosis and against cytolysis by complement: inhibits assembly of the complement membrane attack complex (MAC) by preventing polymerization of C9 pore component of the MAC complex. Intracellular forms interact with ubiquitin and SCF (SKP1-CUL1-F-box protein) E3 ubiquitin-protein ligase complexes and promote the ubiquitination and subsequent proteasomal degradation of target proteins. Promotes proteasomal degradation of COMMD1 and IKBKB. Modulates NF-kappa-B transcriptional activity. Following stress, promotes apoptosis. Inhibits apoptosis when associated with the mitochondrial membrane by interference with BAX-dependent release of cytochrome c into the cytoplasm. Plays a role in the regulation of cell proliferation. An intracellular form suppresses stress-induced apoptosis by stabilizing mitochondrial membrane integrity through interaction with HSPA5. Secreted form does not affect caspase or BAX-mediated intrinsic apoptosis and TNF-induced NF-kappa-B-activity. Secreted form act as an important modulator during neuronal differentiation through interaction with STMN3. Plays a role in the clearance of immune complexes that arise during cell injury. The sequence is that of Clusterin from Mesocricetus auratus (Golden hamster).